The following is a 104-amino-acid chain: Glycine-rich protein (104 aa).

Residues 1-18 (MKSMIAAILFALVATSLA) form the signal peptide.

This sequence belongs to the non-disulfide-bridged peptide (NDBP) superfamily. Expressed by the venom gland.

Its subcellular location is the secreted. The sequence is that of Glycine-rich protein from Lychas mucronatus (Chinese swimming scorpion).